Here is a 468-residue protein sequence, read N- to C-terminus: MKINSPLEAYKYLPQTNCGECGEPTCMAFASKLIDRSGKTSDCPPLVKEKKYAKKLAELDRLLAPEIRQVTIGVGEKAANIGGDDVLYRHKLTFFNKTKMFFDVSDNMEEDALIERVKKIADFKKFYVGRNLLLDGVAIKATSNDPAKFAAAVKKVAEIGLPMIFCSFNPAVLKAGLEVAKDKNPLLYAANKDNWKEVGELALEYKVPVVVSVFNDLDGLKSLAKTFAEAGIKDIVLDPGTYPSGKGLKDTFTNFLKIRRAGIMGDTEIAYPIMALPLTAWMAGISDPVSASYWETVIASVFTIRYGDIMILHSLEPYAALPEMHLAETIYTDPRTPVSVDGGMYKVGEPDKDSPVFFTTNFALTYYTVESDISANGIVCWLLAVDTDGIGVEAAVAGGQLTSAKVKDAFEKAGFDLKTDTNHNTLIIPGLSARLQGDLEDTLGANVKVGPMDSGRIPGWVEKNWPPK.

Residues 1–61 (MKINSPLEAY…YAKKLAELDR (61 aa)) enclose the 4Fe-4S domain. [4Fe-4S] cluster contacts are provided by Cys-18, Cys-21, Cys-26, and Cys-43.

Heterodimer of delta and gamma chains. The ACDS complex is made up of alpha, epsilon, beta, gamma and delta chains with a probable stoichiometry of (alpha(2)epsilon(2))(4)-beta(8)-(gamma(1)delta(1))(8). It depends on corrinoid as a cofactor. [4Fe-4S] cluster serves as cofactor.

The enzyme catalyses 5,6,7,8-tetrahydrosarcinapterin + methyl-Co(III)-[corrinoid Fe-S protein] = 5-methyltetrahydrosarcinapterin + Co(I)-[corrinoid Fe-S protein] + H(+). It participates in one-carbon metabolism; methanogenesis from acetate. Functionally, part of a complex that catalyzes the reversible cleavage of acetyl-CoA, allowing growth on acetate as sole source of carbon and energy. The chain is Acetyl-CoA decarbonylase/synthase complex subunit gamma 1 from Methanosarcina thermophila.